Here is a 369-residue protein sequence, read N- to C-terminus: 2-aminoethylphosphonate--pyruvate transaminase (369 aa).

Lys193 is modified (N6-(pyridoxal phosphate)lysine).

Belongs to the class-V pyridoxal-phosphate-dependent aminotransferase family. PhnW subfamily. In terms of assembly, homodimer. It depends on pyridoxal 5'-phosphate as a cofactor.

It catalyses the reaction (2-aminoethyl)phosphonate + pyruvate = phosphonoacetaldehyde + L-alanine. In terms of biological role, involved in phosphonate degradation. The polypeptide is 2-aminoethylphosphonate--pyruvate transaminase (Burkholderia pseudomallei (strain 668)).